Reading from the N-terminus, the 315-residue chain is MLKNKILATTLSVSLLAPLANPLLENAKAANDTEDIGKGNDVEIIKRTEDKTSNKWGVTQNIQFDFVKDKKYNKDALILKMQGFISSRTTYYNYKNTNHIKSMRWPFQYNIGLKTNDKYVSLINYLPKNKIESTNVSQTLGYNIGGNFQSAPSLGGNGSFNYSKSISYTQQNYVSEVEQQNSKSVLWGVKANSFATESGQKSAFDSDLFVGYKPHSKDPRDYFVPDSELPPLVQSGFNPSFIATVSHEKGSSDTSEFEITYGRNMDVTHAIKRSTHYGNSYLDGHRVHNAFKNRNYTVKYEVNWKTHEIKVKGQN.

The first 29 residues, 1–29, serve as a signal peptide directing secretion; it reads MLKNKILATTLSVSLLAPLANPLLENAKA.

Belongs to the aerolysin family. Toxicity requires sequential binding and synergistic association of a class S and a class F component which form heterooligomeric complexes. HlgC (class S) associates with HlgB (class F) thus forming an CB toxin.

In terms of biological role, toxin that seems to act by forming pores in the membrane of the cell. Has a hemolytic and a leucotoxic activity. The polypeptide is Gamma-hemolysin component C (hlgC) (Staphylococcus aureus (strain MRSA252)).